The following is a 346-amino-acid chain: WD repeat-containing protein LWD1 (346 aa).

Met1 is subject to N-acetylmethionine. 4 WD repeats span residues Glu79–Glu121, Glu133–Gln173, Ala176–Ile214, and Arg265–Glu305.

Its subcellular location is the nucleus. Functionally, clock protein essential for the proper expression phase and period length of both the oscillator and output genes known to participate in photoperiod sensing. Required for the expression of APRR9, APRR7, and APRR5. Regulated by APRR9 and APRR7 at the transcriptional level, indicating the existence of a positive feedback loop within the circadian clock. May function to delay the expression of the morning genes until dawn approaches. In Arabidopsis thaliana (Mouse-ear cress), this protein is WD repeat-containing protein LWD1 (LWD1).